Reading from the N-terminus, the 549-residue chain is MKNSVGISIATIVAIIAAIYYVPWYEHFERKSPGAGEMRDRIESMFLESWRDYSKHGWGYDVYGPIEHTSHNMPRGNQPLGWIIVDSVDTLMLMYNSSTLYKSEFEAEIQRSEHWINDVLDFDIDAEVNVFETTIRMLGGLLSAYHLSDVLEVGNKTVYLNKAIDLGDRLALAFLSTQTGIPYSSINLHSGQAVKNHADGGASSTAEFTTLQMEFKYLAYLTGNRTYWELVERVYEPLYKNNDLLNTYDGLVPIYTFPDTGKFGASTIRFGSRGDSFYEYLLKQYLLTHETLYYDLYRKSMEGMKKHLLAQSKPSSLWYIGEREQGLHGQLSPKMDHLVCFMGGLLASGSTEGLSIHEARRRPFFSLSLERKSDWDLAKGITDTCYQMYKQSSSGLAPEIVVFNDGNIKQDGWWRSSVGDFFVKPLDRHNLQRPETVESIMFMYHLSHDHKYREWGAEIATSFFENTCVDCNDPKLRRFTSLSDCITLPTKKSNNMESFWLAETLKYLYILFLDEFDLTKVVFNTEAHPFPVLDEEILKSQSLTTGWSL.

At 1–4 the chain is on the cytoplasmic side; the sequence is MKNS. Residues 5–24 traverse the membrane as a helical; Signal-anchor for type II membrane protein segment; it reads VGISIATIVAIIAAIYYVPW. At 25–354 the chain is on the lumenal side; it reads YEHFERKSPG…LLASGSTEGL (330 aa). N-linked (GlcNAc...) asparagine glycosylation is found at asparagine 96, asparagine 155, and asparagine 224. An intrachain disulfide couples cysteine 340 to cysteine 385. The Proton donor role is filled by glutamate 399. Cysteine 468 and cysteine 471 are disulfide-bonded. Residue threonine 525 participates in Ca(2+) binding.

It belongs to the glycosyl hydrolase 47 family. As to quaternary structure, homodimer. Ca(2+) is required as a cofactor.

It localises to the endoplasmic reticulum membrane. It catalyses the reaction N(4)-(alpha-D-Man-(1-&gt;2)-alpha-D-Man-(1-&gt;2)-alpha-D-Man-(1-&gt;3)-[alpha-D-Man-(1-&gt;2)-alpha-D-Man-(1-&gt;3)-[alpha-D-Man-(1-&gt;2)-alpha-D-Man-(1-&gt;6)]-alpha-D-Man-(1-&gt;6)]-beta-D-Man-(1-&gt;4)-beta-D-GlcNAc-(1-&gt;4)-beta-D-GlcNAc)-L-asparaginyl-[protein] (N-glucan mannose isomer 9A1,2,3B1,2,3) + 4 H2O = N(4)-(alpha-D-Man-(1-&gt;3)-[alpha-D-Man-(1-&gt;3)-[alpha-D-Man-(1-&gt;6)]-alpha-D-Man-(1-&gt;6)]-beta-D-Man-(1-&gt;4)-beta-D-GlcNAc-(1-&gt;4)-beta-D-GlcNAc)-L-asparaginyl-[protein] (N-glucan mannose isomer 5A1,2) + 4 beta-D-mannose. The catalysed reaction is N(4)-(alpha-D-Man-(1-&gt;2)-alpha-D-Man-(1-&gt;2)-alpha-D-Man-(1-&gt;3)-[alpha-D-Man-(1-&gt;3)-[alpha-D-Man-(1-&gt;2)-alpha-D-Man-(1-&gt;6)]-alpha-D-Man-(1-&gt;6)]-beta-D-Man-(1-&gt;4)-beta-D-GlcNAc-(1-&gt;4)-beta-D-GlcNAc)-L-asparaginyl-[protein] (N-glucan mannose isomer 8A1,2,3B1,3) + 3 H2O = N(4)-(alpha-D-Man-(1-&gt;3)-[alpha-D-Man-(1-&gt;3)-[alpha-D-Man-(1-&gt;6)]-alpha-D-Man-(1-&gt;6)]-beta-D-Man-(1-&gt;4)-beta-D-GlcNAc-(1-&gt;4)-beta-D-GlcNAc)-L-asparaginyl-[protein] (N-glucan mannose isomer 5A1,2) + 3 beta-D-mannose. It participates in protein modification; protein glycosylation. Functionally, involved in glycoprotein quality control as it is important for the targeting of misfolded glycoproteins for degradation. It primarily trims a single alpha-1,2-linked mannose residue from Man(9)GlcNAc(2) to produce Man(8)GlcNAc(2), but at high enzyme concentrations it further trims the carbohydrates to Man(5)GlcNAc(2). This Saccharomyces cerevisiae (strain ATCC 204508 / S288c) (Baker's yeast) protein is Endoplasmic reticulum mannosyl-oligosaccharide 1,2-alpha-mannosidase (MNS1).